We begin with the raw amino-acid sequence, 495 residues long: UDP-N-acetylmuramoyl-L-alanyl-D-glutamate--2,6-diaminopimelate ligase (495 aa).

Position 29 (Ser-29) interacts with UDP-N-acetyl-alpha-D-muramoyl-L-alanyl-D-glutamate. 111-117 (GTNGKTS) is a binding site for ATP. Residues 153-154 (TT), Ser-180, Gln-186, and Arg-188 contribute to the UDP-N-acetyl-alpha-D-muramoyl-L-alanyl-D-glutamate site. The residue at position 220 (Lys-220) is an N6-carboxylysine. Residues Arg-384, 408-411 (DNPR), Gly-459, and Glu-463 each bind meso-2,6-diaminopimelate. The Meso-diaminopimelate recognition motif motif lies at 408–411 (DNPR).

The protein belongs to the MurCDEF family. MurE subfamily. The cofactor is Mg(2+). Post-translationally, carboxylation is probably crucial for Mg(2+) binding and, consequently, for the gamma-phosphate positioning of ATP.

It is found in the cytoplasm. The enzyme catalyses UDP-N-acetyl-alpha-D-muramoyl-L-alanyl-D-glutamate + meso-2,6-diaminopimelate + ATP = UDP-N-acetyl-alpha-D-muramoyl-L-alanyl-gamma-D-glutamyl-meso-2,6-diaminopimelate + ADP + phosphate + H(+). The protein operates within cell wall biogenesis; peptidoglycan biosynthesis. Its function is as follows. Catalyzes the addition of meso-diaminopimelic acid to the nucleotide precursor UDP-N-acetylmuramoyl-L-alanyl-D-glutamate (UMAG) in the biosynthesis of bacterial cell-wall peptidoglycan. The sequence is that of UDP-N-acetylmuramoyl-L-alanyl-D-glutamate--2,6-diaminopimelate ligase from Xylella fastidiosa (strain 9a5c).